Consider the following 214-residue polypeptide: Probable transaldolase (214 aa).

Lys-83 acts as the Schiff-base intermediate with substrate in catalysis.

This sequence belongs to the transaldolase family. Type 3B subfamily.

The protein localises to the cytoplasm. The enzyme catalyses D-sedoheptulose 7-phosphate + D-glyceraldehyde 3-phosphate = D-erythrose 4-phosphate + beta-D-fructose 6-phosphate. Its pathway is carbohydrate degradation; pentose phosphate pathway; D-glyceraldehyde 3-phosphate and beta-D-fructose 6-phosphate from D-ribose 5-phosphate and D-xylulose 5-phosphate (non-oxidative stage): step 2/3. Functionally, transaldolase is important for the balance of metabolites in the pentose-phosphate pathway. This is Probable transaldolase from Desulfosudis oleivorans (strain DSM 6200 / JCM 39069 / Hxd3) (Desulfococcus oleovorans).